A 580-amino-acid chain; its full sequence is Putative monoterpene synthase 8 (580 aa).

Residues 1–44 (MACTSNLSSLSKSWAVLDVPRGAPKATGLWLKRQFIFKTSRICM) constitute a chloroplast transit peptide. Residues aspartate 333, aspartate 337, aspartate 478, threonine 482, and glutamate 486 each coordinate Mg(2+). Positions 333-337 (DDIFD) match the DDXXD motif motif.

It belongs to the terpene synthase family. Tpsg subfamily. Monomer. The cofactor is Mg(2+). Requires Mn(2+) as cofactor. Confined to flowers.

It localises to the plastid. The protein localises to the chloroplast. It functions in the pathway secondary metabolite biosynthesis; terpenoid biosynthesis. Its function is as follows. Monoterpene synthase (mono-TPS) involved in the biosynthesis of monoterpenes natural products, constituent of coffee beverage aroma. This chain is Putative monoterpene synthase 8, found in Coffea arabica (Arabian coffee).